We begin with the raw amino-acid sequence, 243 residues long: MKKLVFTFKRIDHPAQDLAVKFHGFLMEQLDSDYVDYLHQQQTNPYATKVIQGKENTQWVVHLLTDDHEDKVFMTLLQIKEVSLNDLPKLSVEKVEIQELGADKLLEIFNSEENQTYFSIIFETPTGFKSQGSYVIFPSMRLIFQSLMQKYGRLVENQPEIEEDTLDYLSEHSTITNYRLETSYFRVHRQRIPAFRGKLTFKVQGAKTLKAYVKMLLTFGEYSGLGMKTSLGMGGIKLEERKD.

The protein belongs to the CRISPR-associated endoribonuclease Cas6 family. In terms of assembly, part of the Csm effector complex that includes at least Cas10(1), Csm2(3), Csm3(5), Csm4(1); the presence of Csm5 and Cas6 may depend on the processing state of precursor crRNA. Csm with a precursor crRNA does not include Csm5, while Cas6, the enzyme probably involved in pre-crRNA processing, is found associated with a subset of the Csm complex that is probably in the process of pre-crRNA maturation. The Csm complex is elongated and slightly twisted with a maximal length of 215 Angstroms and a diameter of 75-80 Angstroms. It has been modeled to have a central protein filamant of Csm3 subunits along which the dsRNA helix of paired crRNA and target RNA binds. The filament is capped at one end by Cas10 and Csm4 and at the other end by Csm5; ssDNA is thought to bind to the N-terminal HD domain of Cas10.

Its function is as follows. CRISPR (clustered regularly interspaced short palindromic repeat) is an adaptive immune system that provides protection against mobile genetic elements (viruses, transposable elements and conjugative plasmids). CRISPR clusters contain spacers, sequences complementary to antecedent mobile elements, and target invading nucleic acids. CRISPR clusters are transcribed and processed into CRISPR RNA (crRNA). The type III-A Csm effector complex binds crRNA and acts as a crRNA-guided RNase, DNase and cyclic oligoadenylate synthase; binding of target RNA cognate to the crRNA is required for all activities. In a heterologous host this Csm effector complex restricts ssRNA phage MS2, suggesting it may target RNA viruses in vivo. In terms of biological role, csm functions as a non-specific ssDNase. Base-pairing between crRNA and target RNA to form a ternary Csm complex activates a ssDNase activity; target RNA cleavage suppresses the ssDNase, a temporal control that prevents uncontrolled DNA degradation. Viral RNA transcripts probably tether the Csm complex to the viral genome, recruiting Cas10 ssDNA activity which is able to degrade DNA in the transcription bubble, spatially controlling the DNase activity. Functionally, this protein processes pre-crRNA into individual crRNA units. The sequence is that of CRISPR-associated endoribonuclease Cas6 from Streptococcus thermophilus.